A 178-amino-acid chain; its full sequence is Large ribosomal subunit protein uL6 (178 aa).

It belongs to the universal ribosomal protein uL6 family. As to quaternary structure, part of the 50S ribosomal subunit.

In terms of biological role, this protein binds to the 23S rRNA, and is important in its secondary structure. It is located near the subunit interface in the base of the L7/L12 stalk, and near the tRNA binding site of the peptidyltransferase center. The sequence is that of Large ribosomal subunit protein uL6 from Buchnera aphidicola subsp. Acyrthosiphon pisum (strain APS) (Acyrthosiphon pisum symbiotic bacterium).